The sequence spans 258 residues: Spindlin-3 (258 aa).

The disordered stretch occupies residues 1–23; sequence MKTPFGKAAAGQRSRTGAGHGSV. Tudor-like domain regions lie at residues 50-99, 129-178, and 210-255; these read VGCR…LELH, VGKA…YQLL, and VGKQ…YDLV. Histone H3K4me3 and H3R8me2a binding regions lie at residues E138 and 246-248; that span reads DFH.

This sequence belongs to the SPIN/STSY family. Interacts with C11orf84/SPINDOC.

Its function is as follows. Exhibits H3K4me3-binding activity. This chain is Spindlin-3 (SPIN3), found in Homo sapiens (Human).